The sequence spans 140 residues: Nucleoside diphosphate kinase (140 aa).

ATP is bound by residues lysine 11, phenylalanine 59, arginine 87, threonine 93, arginine 104, and asparagine 114. Residue histidine 117 is the Pros-phosphohistidine intermediate of the active site.

Belongs to the NDK family. As to quaternary structure, homotetramer. Mg(2+) is required as a cofactor.

The protein resides in the cytoplasm. The catalysed reaction is a 2'-deoxyribonucleoside 5'-diphosphate + ATP = a 2'-deoxyribonucleoside 5'-triphosphate + ADP. It carries out the reaction a ribonucleoside 5'-diphosphate + ATP = a ribonucleoside 5'-triphosphate + ADP. Functionally, major role in the synthesis of nucleoside triphosphates other than ATP. The ATP gamma phosphate is transferred to the NDP beta phosphate via a ping-pong mechanism, using a phosphorylated active-site intermediate. The polypeptide is Nucleoside diphosphate kinase (Methylocella silvestris (strain DSM 15510 / CIP 108128 / LMG 27833 / NCIMB 13906 / BL2)).